A 186-amino-acid chain; its full sequence is Ribosome maturation factor RimM (186 aa).

The PRC barrel domain maps to 100–182 (NEGEYHVSDL…RIEINPPVGL (83 aa)).

It belongs to the RimM family. As to quaternary structure, binds ribosomal protein uS19.

The protein localises to the cytoplasm. Its function is as follows. An accessory protein needed during the final step in the assembly of 30S ribosomal subunit, possibly for assembly of the head region. Essential for efficient processing of 16S rRNA. May be needed both before and after RbfA during the maturation of 16S rRNA. It has affinity for free ribosomal 30S subunits but not for 70S ribosomes. The protein is Ribosome maturation factor RimM of Rippkaea orientalis (strain PCC 8801 / RF-1) (Cyanothece sp. (strain PCC 8801)).